Here is a 474-residue protein sequence, read N- to C-terminus: MKNFMCDDFLLNNETARQLYHEHAADMPIYDYHCHLNPREIAENRRFDNLGQIWLEGDHYKWRAMRCAGIDESLITGKQTRDYEKYQAWAETVPLTLGNPLYHWTHLELRRPFGISGILFGPQTADEIWHQCNEKLAAPAFSARGIMQQMNVRMVGTTDDPVDSLQYHRQIATDESFDIEVLPSWRPDRVFKIELAGFIDYIKQLEAVADVSIVAFADVLNALERRLEHFAAHGCRAADHGIENLRYAPIPDETVLNGILQKRLAGGILSELEIAQYTTAILVWLGRQYAARGWVMQMHIGAIRNNNSRMFRLLGADSGFDSIGDNNIAWPLSRLLDSMDVTDELPKTILYCLNPRDNEVIATMASNFQGGGIAGKVQFGSGWWFNDQKDGMLRQLEQLSQLGLLSQFVGMLTDSRSFLSYTRHEYFRRILCNVLGQWAEKGEIPNHKAMLGQIVEDICFNNARRYFALPGENL.

It belongs to the metallo-dependent hydrolases superfamily. Uronate isomerase family.

It carries out the reaction D-glucuronate = D-fructuronate. It catalyses the reaction aldehydo-D-galacturonate = keto-D-tagaturonate. Its pathway is carbohydrate metabolism; pentose and glucuronate interconversion. The sequence is that of Uronate isomerase from Photorhabdus laumondii subsp. laumondii (strain DSM 15139 / CIP 105565 / TT01) (Photorhabdus luminescens subsp. laumondii).